The sequence spans 264 residues: 3-methyl-2-oxobutanoate hydroxymethyltransferase (264 aa).

Residues aspartate 45 and aspartate 84 each coordinate Mg(2+). 3-methyl-2-oxobutanoate contacts are provided by residues 45-46, aspartate 84, and lysine 112; that span reads DS. Glutamate 114 serves as a coordination point for Mg(2+). Glutamate 181 functions as the Proton acceptor in the catalytic mechanism.

Belongs to the PanB family. As to quaternary structure, homodecamer; pentamer of dimers. Mg(2+) serves as cofactor.

It is found in the cytoplasm. The catalysed reaction is 3-methyl-2-oxobutanoate + (6R)-5,10-methylene-5,6,7,8-tetrahydrofolate + H2O = 2-dehydropantoate + (6S)-5,6,7,8-tetrahydrofolate. It participates in cofactor biosynthesis; (R)-pantothenate biosynthesis; (R)-pantoate from 3-methyl-2-oxobutanoate: step 1/2. In terms of biological role, catalyzes the reversible reaction in which hydroxymethyl group from 5,10-methylenetetrahydrofolate is transferred onto alpha-ketoisovalerate to form ketopantoate. In Erwinia tasmaniensis (strain DSM 17950 / CFBP 7177 / CIP 109463 / NCPPB 4357 / Et1/99), this protein is 3-methyl-2-oxobutanoate hydroxymethyltransferase.